The primary structure comprises 328 residues: L-lactate dehydrogenase (328 aa).

Residues Val-18, Glu-39, Lys-46, Tyr-71, and 85–86 contribute to the NAD(+) site; that span reads GA. Residues Gln-88 and Arg-94 each contribute to the substrate site. Residues Ser-107, 124 to 126, and Ser-149 each bind NAD(+); that span reads AAN. Residue 126 to 129 coordinates substrate; sequence NPVD. Substrate is bound at residue 154 to 157; sequence DSAR. Beta-D-fructose 1,6-bisphosphate is bound by residues Arg-159 and His-174. His-181 (proton acceptor) is an active-site residue. Tyr-226 is subject to Phosphotyrosine. Substrate is bound at residue Thr-235.

This sequence belongs to the LDH/MDH superfamily. LDH family. As to quaternary structure, homotetramer.

It is found in the cytoplasm. It carries out the reaction (S)-lactate + NAD(+) = pyruvate + NADH + H(+). It participates in fermentation; pyruvate fermentation to lactate; (S)-lactate from pyruvate: step 1/1. Its activity is regulated as follows. Allosterically activated by fructose 1,6-bisphosphate (FBP). Functionally, catalyzes the conversion of lactate to pyruvate. In Streptococcus sanguinis (strain SK36), this protein is L-lactate dehydrogenase.